We begin with the raw amino-acid sequence, 209 residues long: Regulator of G-protein signaling 1 (209 aa).

The interval 19 to 42 is disordered; that stretch reads FSASPKDSKEHSHSLLDDKKQKKR. The segment covering 24 to 38 has biased composition (basic and acidic residues); that stretch reads KDSKEHSHSLLDDKK. The RGS domain maps to 85–200; that stretch reads SLEKLLANQT…LKSNIYLNLL (116 aa).

As to quaternary structure, interacts with GNAI1 and GNAQ. Detected in spleen, lymph node and intestine.

The protein localises to the cell membrane. Its subcellular location is the cytoplasm. It is found in the cytosol. Regulates G protein-coupled receptor signaling cascades, including signaling downstream of the N-formylpeptide chemoattractant receptors and leukotriene receptors. Inhibits B cell chemotaxis toward CXCL12. Inhibits signal transduction by increasing the GTPase activity of G protein alpha subunits thereby driving them into their inactive GDP-bound form. The chain is Regulator of G-protein signaling 1 (Rgs1) from Mus musculus (Mouse).